Consider the following 402-residue polypeptide: Multidrug resistance protein MdtH (402 aa).

11 consecutive transmembrane segments (helical) span residues 13–33 (YFLL…FPLI), 34–54 (SIRF…ALGL), 99–116 (PWVL…GTLF), 139–159 (ILMM…SWLL), 165–185 (LVCS…AWYL), 214–234 (VLTL…LPIM), 243–263 (AAVK…LYPI), 277–297 (LMAG…TSSL), 300–320 (LFTL…ARET), 340–360 (LGLA…FDAG), and 369–389 (PWLM…WQFS).

Belongs to the major facilitator superfamily. DHA1 family. MdtH (TC 2.A.1.2.21) subfamily.

It localises to the cell inner membrane. This is Multidrug resistance protein MdtH from Klebsiella pneumoniae subsp. pneumoniae (strain ATCC 700721 / MGH 78578).